The following is a 459-amino-acid chain: V-type ATP synthase beta chain (459 aa).

Belongs to the ATPase alpha/beta chains family.

Functionally, produces ATP from ADP in the presence of a proton gradient across the membrane. The V-type beta chain is a regulatory subunit. This Thermoanaerobacter pseudethanolicus (strain ATCC 33223 / 39E) (Clostridium thermohydrosulfuricum) protein is V-type ATP synthase beta chain.